Here is a 479-residue protein sequence, read N- to C-terminus: Odorant receptor coreceptor (479 aa).

The Cytoplasmic segment spans residues M1 to F43. Residues C44–I64 form a helical membrane-spanning segment. The Extracellular segment spans residues E65–T73. The chain crosses the membrane as a helical span at residues A74–V94. Over R95–L133 the chain is Cytoplasmic. A helical transmembrane segment spans residues L134–F154. Over E155–G190 the chain is Extracellular. N167 carries N-linked (GlcNAc...) asparagine glycosylation. A helical transmembrane segment spans residues I191–A211. At N212–D350 the chain is on the cytoplasmic side. Residues S261–G280 are disordered. Residues A351–A371 traverse the membrane as a helical segment. The Extracellular segment spans residues Y372 to Y383. Residues A384 to F404 traverse the membrane as a helical segment. At G405 to T455 the chain is on the cytoplasmic side. The chain crosses the membrane as a helical span at residues V456 to V476. Residues Q477–K479 lie on the Extracellular side of the membrane.

This sequence belongs to the insect chemoreceptor superfamily. Heteromeric odorant receptor channel (TC 1.A.69) family. Orco subfamily. As to quaternary structure, heterodimer with conventional odorant receptors (ORs).

It localises to the cell membrane. In terms of biological role, odorant coreceptor which complexes with conventional odorant receptors (ORs) to form odorant-sensing units, providing sensitive and prolonged odorant signaling and calcium permeability. Obligate coreceptor of all odorant receptors. Orco is a universal and integral part of the functional odorant receptor, involved in the dendritic localization of other olfactory receptors. Can form functional ion channels in the absence of an odor-binding odorant receptor. Plays a central role in the perception of olfactory stimuli in ants and is essential for ant social organization. Required for pheromone sensing and mating behavior. Also required for the development and maintenance of odorant receptor neurons (ORNs) and of antennal lobe glomeruli. The chain is Odorant receptor coreceptor from Harpegnathos saltator (Jerdon's jumping ant).